The primary structure comprises 280 residues: Feruloyl esterase 1 (280 aa).

A signal peptide spans 1-20 (MKAFATRALAFSVAAGQALA). Cystine bridges form between cysteine 49–cysteine 278, cysteine 111–cysteine 114, and cysteine 247–cysteine 254. A glycan (N-linked (GlcNAc...) asparagine) is linked at asparagine 99. The Nucleophile role is filled by serine 153. The Charge relay system role is filled by aspartate 214. The Charge relay system role is filled by histidine 267.

It belongs to the AB hydrolase superfamily. FaeA family. In terms of processing, glycosylated.

It is found in the secreted. It catalyses the reaction feruloyl-polysaccharide + H2O = ferulate + polysaccharide.. With respect to regulation, metal or basic ions Mn(2+), Ni(+), Mg(2+), and NH(4)(+) decrease the activity by 4.4% to 14.1%. The enzymatic activity is inhibited by Zn(2+) at a low concentration (1 mM) but not a high concentration (5 mM). Loses about a quarter of activity by the addition of 1 mM of Cu(2+) or Fe(3+) and activity is completely suppressed when the concentration was up to 5 mM. Low concentrations (0.25 and 0.5 M) of NaCl improve the activity by 5.6 % or 8.3%, respectively. In terms of biological role, involved in degradation of plant cell walls. Hydrolyzes the feruloyl-arabinose ester bond in arabinoxylans, and the feruloyl-galactose ester bond in pectin. This chain is Feruloyl esterase 1, found in Penicillium parvum (Eupenicillium parvum).